We begin with the raw amino-acid sequence, 439 residues long: Ribosomal protein uS12 methylthiotransferase RimO (439 aa).

The MTTase N-terminal domain maps to 3-118; that stretch reads KKFYITTLGC…AGKILREKFP (116 aa). The [4Fe-4S] cluster site is built by Cys12, Cys48, Cys81, Cys157, Cys161, and Cys164. The region spanning 143–370 is the Radical SAM core domain; it reads NYSKPYAYVK…RDVHLAILEE (228 aa). The region spanning 373–438 is the TRAM domain; sequence ESRIGQTYDA…EYDMNGTWIS (66 aa).

Belongs to the methylthiotransferase family. RimO subfamily. Requires [4Fe-4S] cluster as cofactor.

The protein resides in the cytoplasm. The catalysed reaction is L-aspartate(89)-[ribosomal protein uS12]-hydrogen + (sulfur carrier)-SH + AH2 + 2 S-adenosyl-L-methionine = 3-methylsulfanyl-L-aspartate(89)-[ribosomal protein uS12]-hydrogen + (sulfur carrier)-H + 5'-deoxyadenosine + L-methionine + A + S-adenosyl-L-homocysteine + 2 H(+). Catalyzes the methylthiolation of an aspartic acid residue of ribosomal protein uS12. The polypeptide is Ribosomal protein uS12 methylthiotransferase RimO (Leptospira borgpetersenii serovar Hardjo-bovis (strain JB197)).